The primary structure comprises 443 residues: Putative F-box/FBD/LRR-repeat protein At3g49030 (443 aa).

Positions 20–68 constitute an F-box domain; it reads EDRISELPEDLLLQILSDIPTENVIATSVLSKRWRSLWKMVPNLTFDFT. LRR repeat units follow at residues 74-100, 152-179, 180-205, 218-252, 272-297, and 320-345; these read HQTFSENLYRSLTSHEASVLESLQLNF, ILEIQDYILLDLPSPVCLKSLRELRLYE, VHFKDEASVCNLLCGCPSLEVLSVHR, VPSLQRLTIYDFCIGGGKGGYVINAPSLKYLNIVG, ISDVSHIANENILESLTSVKRLSLES, and KEREWWNLLSRMLESSPKLQILKLTG. The FBD domain maps to 357–408; it reads NWNPPKCVPECLLFHLEKFLWTGYEWQRGDEKEVATYILENARLLKKATFST.

This chain is Putative F-box/FBD/LRR-repeat protein At3g49030, found in Arabidopsis thaliana (Mouse-ear cress).